The primary structure comprises 101 residues: NAD(P)H-quinone oxidoreductase subunit 4L, chloroplastic (101 aa).

3 helical membrane-spanning segments follow: residues 2–22, 32–52, and 61–81; these read MTEH…YGLI, MCLE…SDLF, and IFSI…PAIV.

This sequence belongs to the complex I subunit 4L family. NDH is composed of at least 16 different subunits, 5 of which are encoded in the nucleus.

The protein localises to the plastid. The protein resides in the chloroplast thylakoid membrane. It carries out the reaction a plastoquinone + NADH + (n+1) H(+)(in) = a plastoquinol + NAD(+) + n H(+)(out). It catalyses the reaction a plastoquinone + NADPH + (n+1) H(+)(in) = a plastoquinol + NADP(+) + n H(+)(out). In terms of biological role, NDH shuttles electrons from NAD(P)H:plastoquinone, via FMN and iron-sulfur (Fe-S) centers, to quinones in the photosynthetic chain and possibly in a chloroplast respiratory chain. The immediate electron acceptor for the enzyme in this species is believed to be plastoquinone. Couples the redox reaction to proton translocation, and thus conserves the redox energy in a proton gradient. In Liriodendron tulipifera (Tuliptree), this protein is NAD(P)H-quinone oxidoreductase subunit 4L, chloroplastic.